The chain runs to 478 residues: Glutamine synthetase (478 aa).

Residue Lys-14 forms an Isoglutamyl lysine isopeptide (Lys-Gln) (interchain with Q-Cter in protein Pup) linkage. In terms of domain architecture, GS beta-grasp spans 16–100 (ENVEYVDIRF…MNFFVHDPFT (85 aa)). The GS catalytic domain maps to 108-478 (PRNVARKAEN…PYEFSLYYDV (371 aa)). 2 residues coordinate Mg(2+): Glu-133 and Glu-135. Glu-214 contacts ATP. Residues Glu-219 and Glu-227 each contribute to the Mg(2+) site. 230-232 (YKF) contributes to the ATP binding site. L-glutamate-binding positions include 271-272 (NG) and Gly-272. Position 276 (His-276) interacts with Mg(2+). Residues 278-280 (HQS) and Ser-280 each bind ATP. L-glutamate contacts are provided by Arg-329, Glu-335, and Arg-347. ATP contacts are provided by Arg-347, Arg-352, and Lys-361. Mg(2+) is bound at residue Glu-366. Position 368 (Arg-368) interacts with L-glutamate. Position 406 is an O-AMP-tyrosine (Tyr-406).

Belongs to the glutamine synthetase family. Oligomer of 12 subunits arranged in the form of two hexagons. Mg(2+) serves as cofactor.

It is found in the cytoplasm. It catalyses the reaction L-glutamate + NH4(+) + ATP = L-glutamine + ADP + phosphate + H(+). When cellular nitrogen levels are high, the C-terminal adenylyl transferase (AT) of GlnE inhibits GlnA by covalent transfer of an adenylyl group from ATP to Tyr-406. Conversely, when nitrogen levels are low, the N-terminal adenylyl removase (AR) of GlnE activates GlnA by removing the adenylyl group by phosphorolysis. The fully adenylated enzyme complex is inactive. In terms of biological role, involved in nitrogen metabolism via ammonium assimilation. Catalyzes the ATP-dependent biosynthesis of glutamine from glutamate and ammonia. The polypeptide is Glutamine synthetase (Mycolicibacterium smegmatis (strain ATCC 700084 / mc(2)155) (Mycobacterium smegmatis)).